The chain runs to 1714 residues: MAQFPTPFGGSLDVWAITVEERAKHDQQFLSLKPIAGFITGDQARNFFFQSGLPQPVLAQIWALADMNNDGRMDQVEFSIAMKLIKLKLQGYQLPSTLPPVMKQQPVAISSAPAFGIGGIASMPPLTAVAPVPMGSIPVVGMSPPLVSSVPPAAVPPLANGAPPVIQPLPAFAHPAATLPKSSSFSRSGPGSQLNTKLQKAQSFDVASAPPAAEWAVPQSSRLKYRQLFNSHDKTMSGHLTGPQARTILMQSSLPQAQLASIWNLSDIDQDGKLTAEEFILAMHLIDVAMSGQPLPPVLPPEYIPPSFRRVRSGSGMSVISSSSVDQRLPEEPSSEDEQQPEKKLPVTFEDKKRENFERGSVELEKRRQALLEQQRKEQERLAQLERAEQERKERERQEQERKRQLELEKQLEKQRELERQREEERRKEIERREAAKRELERQRQLEWERNRRQELLNQRNKEQEGTVVLKARRKTLEFELEALNDKKHQLEGKLQDIRCRLATQRQEIESTNKSRELRIAEITHLQQQLQESQQMLGRLIPEKQILSDQLKQVQQNSLHRDSLLTLKRALEAKELARQQLREQLDEVERETRSKLQEIDVFNNQLKELREIHSKQQLQKQRSLEAARLKQKEQERKSLELEKQKEDAQRRVQERDKQWLEHVQQEEQPRPRKPHEEDRLKREDSVRKKEAEERAKPEMQDKQSRLFHPHQEPAKLATQAPWSTTEKGPLTISAQESVKVVYYRALYPFESRSHDEITIQPGDIVMVDESQTGEPGWLGGELKGKTGWFPANYAEKIPENEVPTPAKPVTDLTSAPAPKLALRETPAPLPVTSSEPSTTPNNWADFSSTWPSSSNEKPETDNWDTWAAQPSLTVPSAGQLRQRSAFTPATATGSSPSPVLGQGEKVEGLQAQALYPWRAKKDNHLNFNKSDVITVLEQQDMWWFGEVQGQKGWFPKSYVKLISGPVRKSTSIDTGPTESPASLKRVASPAAKPAIPGEEFIAMYTYESSEQGDLTFQQGDVIVVTKKDGDWWTGTVGDKSGVFPSNYVRLKDSEGSGTAGKTGSLGKKPEIAQVIASYAATGPEQLTLAPGQLILIRKKNPGGWWEGELQARGKKRQIGWFPANYVKLLSPGTSKITPTELPKTAVQPAVCQVIGMYDYTAQNDDELAFSKGQIINVLNKEDPDWWKGEVSGQVGLFPSNYVKLTTDMDPSQQWCSDLHLLDMLTPTERKRQGYIHELIVTEENYVNDLQLVTEIFQKPLTESELLTEKEVAMIFVNWKELIMCNIKLLKALRVRKKMSGEKMPVKMIGDILSAQLPHMQPYIRFCSCQLNGAALIQQKTDEAPDFKEFVKRLAMDPRCKGMPLSSFILKPMQRVTRYPLIIKNILENTPENHPDHSHLKHALEKAEELCSQVNEGVREKENSDRLEWIQAHVQCEGLSEQLVFNSVTNCLGPRKFLHSGKLYKAKSNKELYGFLFNDFLLLTQITKPLGSSGTDKVFSPKSNLQYKMYKTPIFLNEVLVKLPTDPSGDEPIFHISHIDRVYTLRAESINERTAWVQKIKAASELYIETEKKKREKAYLVRSQRATGIGRLMVNVVEGIELKPCRSHGKSNPYCEVTMGSQCHITKTIQDTLNPKWNSNCQFFIRDLEQEVLCITVFERDQFSPDDFLGRTEIRVADIKKDQGSKGPVTKCLLLHEVPTGEIVVRLDLQLFDEP.

Residues 21-109 enclose the EH 1 domain; the sequence is ERAKHDQQFL…PVMKQQPVAI (89 aa). The EF-hand 1 domain maps to 53-88; that stretch reads LPQPVLAQIWALADMNNDGRMDQVEFSIAMKLIKLK. Positions 66, 68, 70, 72, and 77 each coordinate Ca(2+). Ser203 carries the post-translational modification Phosphoserine. The EH 2 domain occupies 221 to 310; it reads SRLKYRQLFN…PEYIPPSFRR (90 aa). The 36-residue stretch at 254–289 folds into the EF-hand 2 domain; that stretch reads LPQAQLASIWNLSDIDQDGKLTAEEFILAMHLIDVA. The Ca(2+) site is built by Asp267, Asp269, Asp271, Lys273, and Glu278. Low complexity predominate over residues 310 to 325; the sequence is RVRSGSGMSVISSSSV. Disordered regions lie at residues 310 to 356 and 614 to 706; these read RVRS…KREN and SKQQ…QSRL. A phosphoserine mark is found at Ser318, Ser334, and Ser335. Positions 326–702 are KLERQ; that stretch reads DQRLPEEPSS…ERAKPEMQDK (377 aa). 2 stretches are compositionally biased toward basic and acidic residues: residues 340–356 and 622–706; these read QPEK…KREN and RSLE…QSRL. Residues 354-658 are a coiled coil; that stretch reads RENFERGSVE…QRRVQERDKQ (305 aa). Ser685 is modified (phosphoserine). An SH3 1 domain is found at 738 to 799; the sequence is VKVVYYRALY…PANYAEKIPE (62 aa). Residues 827–863 are disordered; that stretch reads APLPVTSSEPSTTPNNWADFSSTWPSSSNEKPETDNW. Positions 831–855 are enriched in polar residues; it reads VTSSEPSTTPNNWADFSSTWPSSSN. Phosphothreonine is present on Thr890. Residues Ser894, Ser895, and Ser897 each carry the phosphoserine modification. In terms of domain architecture, SH3 2 spans 906–964; sequence VEGLQAQALYPWRAKKDNHLNFNKSDVITVLEQQDMWWFGEVQGQKGWFPKSYVKLISG. Ser971 carries the phosphoserine modification. Residue Thr977 is modified to Phosphothreonine. Ser979 and Ser988 each carry phosphoserine. SH3 domains are found at residues 995–1053 and 1067–1131; these read IPGE…LKDS and KKPE…LLSP. The segment at 1067–1131 is required for interaction with FCHSD2; the sequence is KKPEIAQVIA…PANYVKLLSP (65 aa). A Bipartite nuclear localization signal; in isoform 2 motif is present at residues 1097 to 1120; it reads RKKNPGGWWEGELQARGKKRQIGW. Position 1130 is a phosphoserine (Ser1130). Residue Thr1137 is modified to Phosphothreonine. The region spanning 1148-1207 is the SH3 5 domain; that stretch reads PAVCQVIGMYDYTAQNDDELAFSKGQIINVLNKEDPDWWKGEVSGQVGLFPSNYVKLTTD. The 187-residue stretch at 1230 to 1416 folds into the DH domain; the sequence is KRQGYIHELI…EELCSQVNEG (187 aa). In terms of domain architecture, PH spans 1455 to 1564; it reads KFLHSGKLYK…WVQKIKAASE (110 aa). Residues 1572–1688 enclose the C2 domain; it reads KKREKAYLVR…KKDQGSKGPV (117 aa). Ser1638 bears the Phosphoserine mark. Residues Asp1660, Ser1663, and Asp1666 each contribute to the Ca(2+) site.

In terms of assembly, interacts (via DH domain) with CDC42. Interacts (via SH3 domain 1) with WASL. Interacts with dynamin, SNAP25 and SNAP23. Interacts with clathrin-associated proteins and other components of the endocytic machinery, such as SPIN90, EPS15, EPN1, EPN2, STON2, FCHO1, FCHO2 and DAB2. Interacts (via SH3 domains) with REPS1 and SGIP1. Interacts with ARHGAP31. Interacts with ADAM15. Interacts with PRRT2. Interacts (via SH3 domain 4) with FCHSD2 (via SH3 domain 2). Interacts (via SH3 domain 1) with DENND2B. Interacts (via SH3 domains) with CBL. Isoform 2: Interacts with CBL and DNM1. Isoform 2: Interacts with LMNA. Isoform 2: Interacts with importin subunit KPNA1; this is likely to mediate its import into the nucleus. Interacts with DNM2. The cofactor is Ca(2+). Detected in brain, adrenal gland and heart. Detected in neurons at the calyx of Held (at protein level). Isoform 1: Primarily detected in brain neurons. Isoform 2: Primarily detected in glia (at protein level). Widely expressed. Expressed at high levels in brain, heart and skeletal muscle.

The protein resides in the endomembrane system. It localises to the synapse. It is found in the synaptosome. Its subcellular location is the cell projection. The protein localises to the lamellipodium. The protein resides in the cell membrane. It localises to the membrane. It is found in the clathrin-coated pit. Its subcellular location is the recycling endosome. The protein localises to the endosome. The protein resides in the cytoplasmic vesicle. It localises to the cytoplasm. It is found in the nucleus envelope. Its function is as follows. Adapter protein that provides a link between the endocytic membrane traffic and the actin assembly machinery. Acts as a guanine nucleotide exchange factor (GEF) for CDC42, and thereby stimulates actin nucleation mediated by WASL and the ARP2/3 complex. Plays a role in the assembly and maturation of clathrin-coated vesicles. Recruits FCHSD2 to clathrin-coated pits. Involved in endocytosis of activated EGFR, and probably also other growth factor receptors. Involved in endocytosis of integrin beta-1 (ITGB1) and transferrin receptor (TFR); internalization of ITGB1 as DAB2-dependent cargo but not TFR may involve association with DAB2. Promotes ubiquitination and subsequent degradation of EGFR, and thereby contributes to the down-regulation of EGFR-dependent signaling pathways. In chromaffin cells, required for normal exocytosis of catecholamines. Required for rapid replenishment of release-ready synaptic vesicles at presynaptic active zones. Inhibits ARHGAP31 activity toward RAC1. Functionally, plays a role in synaptic vesicle endocytosis in brain neurons. This is Intersectin-1 from Mus musculus (Mouse).